We begin with the raw amino-acid sequence, 692 residues long: Methionine--tRNA ligase (692 aa).

The 'HIGH' region motif lies at 12-22; that stretch reads PYANGSFHIGH. Zn(2+)-binding residues include C143, C146, C156, and C159. The 'KMSKS' region motif lies at 341–345; the sequence is KMSKS. ATP is bound at residue K344. The region spanning 586–692 is the tRNA-binding domain; the sequence is DFAKIDLRIA…PGAQPGMRVR (107 aa).

This sequence belongs to the class-I aminoacyl-tRNA synthetase family. MetG type 1 subfamily. In terms of assembly, homodimer. Zn(2+) serves as cofactor.

The protein resides in the cytoplasm. The enzyme catalyses tRNA(Met) + L-methionine + ATP = L-methionyl-tRNA(Met) + AMP + diphosphate. In terms of biological role, is required not only for elongation of protein synthesis but also for the initiation of all mRNA translation through initiator tRNA(fMet) aminoacylation. This chain is Methionine--tRNA ligase, found in Bordetella bronchiseptica (strain ATCC BAA-588 / NCTC 13252 / RB50) (Alcaligenes bronchisepticus).